Reading from the N-terminus, the 116-residue chain is NADH-ubiquinone oxidoreductase chain 3 (116 aa).

A run of 3 helical transmembrane segments spans residues 3 to 23, 56 to 76, and 85 to 105; these read LILAGLLIMSILSMILAMIAF, FFLVAILFLLFDLEIALLLPL, and PTLALTWTTSIIALLTLGLIH.

The protein belongs to the complex I subunit 3 family.

It is found in the mitochondrion membrane. The enzyme catalyses a ubiquinone + NADH + 5 H(+)(in) = a ubiquinol + NAD(+) + 4 H(+)(out). Functionally, core subunit of the mitochondrial membrane respiratory chain NADH dehydrogenase (Complex I) that is believed to belong to the minimal assembly required for catalysis. Complex I functions in the transfer of electrons from NADH to the respiratory chain. The immediate electron acceptor for the enzyme is believed to be ubiquinone. The protein is NADH-ubiquinone oxidoreductase chain 3 (MT-ND3) of Latimeria chalumnae (Coelacanth).